A 663-amino-acid chain; its full sequence is MRGCLQSVRWLTTALRRPAPQLSCLPFQPFASTSRLFSSCASRAATAARKPPSELEQRIAAIPIERFRNFCIVAHVDHGKSTLSDRLLELTGTIEPGSNKQVLDKLDVERERGITVKAQTCTMLYNYKGEDYLLHLVDTPGHVDFRAEVSRSYASCGGALLLVDASQGVQAQTVANFYLAFAQGLELVPVINKVDLPSADPDRALDQMKSSFELDVEQAVLVSAKTGLNVKQLLPTIVEQIPAPVGDHTKPLRVLLVDSWYDTYKGVILLIRVFDGEIKAGDQVVSFATGKKYIVGEVGIMYPNQTPQTVLRAGQVGYVYFNPGMKQSQEAKIGDTYTKVGSEKLVEPLPGFEEPKAMVFVAAYPVNSDDFPHLEESINQLLLNDRSITVKKESSEALGGGFRLGFLGTLHCSVFQDRLQQEHGANIIITPPSVPCKILWKSGEETVITSPIDFPDDDSSRMKVEEFQEPYVLTTLTFPQEYLGKVIELCEGNRGEQVSLEFFTATQVILKYQLPLAQLVDDFFGKLKGLTKGYASLDYEESGWRKSNIVKLKLLVNKVPVDAVSRVVHTSQVARLGRQWVTKFKEHVDRQMFEIVIQAAVGNKIVARESVKPFRKDVLAKLHASDVTRRRKLLEKQKEGRKRLQAVGNVIIEHKAFQAFLSK.

The N-terminal 44 residues, methionine 1–alanine 44, are a transit peptide targeting the mitochondrion. A tr-type G domain is found at glutamate 65–valine 245. GTP is bound by residues alanine 74–serine 81, aspartate 138–histidine 142, and asparagine 192–aspartate 195.

This sequence belongs to the TRAFAC class translation factor GTPase superfamily. Classic translation factor GTPase family. LepA subfamily.

It is found in the mitochondrion inner membrane. It catalyses the reaction GTP + H2O = GDP + phosphate + H(+). Promotes mitochondrial protein synthesis. May act as a fidelity factor of the translation reaction, by catalyzing a one-codon backward translocation of tRNAs on improperly translocated ribosomes. Binds to mitochondrial ribosomes in a GTP-dependent manner. This Coccidioides posadasii (strain C735) (Valley fever fungus) protein is Translation factor GUF1, mitochondrial.